A 499-amino-acid chain; its full sequence is Probable cytosol aminopeptidase (499 aa).

Residues lysine 269 and aspartate 274 each coordinate Mn(2+). Lysine 281 is a catalytic residue. Mn(2+) contacts are provided by aspartate 292, aspartate 351, and glutamate 353. Arginine 355 is an active-site residue.

The protein belongs to the peptidase M17 family. The cofactor is Mn(2+).

It is found in the cytoplasm. The catalysed reaction is Release of an N-terminal amino acid, Xaa-|-Yaa-, in which Xaa is preferably Leu, but may be other amino acids including Pro although not Arg or Lys, and Yaa may be Pro. Amino acid amides and methyl esters are also readily hydrolyzed, but rates on arylamides are exceedingly low.. The enzyme catalyses Release of an N-terminal amino acid, preferentially leucine, but not glutamic or aspartic acids.. Functionally, presumably involved in the processing and regular turnover of intracellular proteins. Catalyzes the removal of unsubstituted N-terminal amino acids from various peptides. This Haemophilus ducreyi (strain 35000HP / ATCC 700724) protein is Probable cytosol aminopeptidase.